Reading from the N-terminus, the 725-residue chain is Ribosomal RNA large subunit methyltransferase K/L (725 aa).

A THUMP domain is found at 46 to 157 (VAYRLCLWSR…RGEAVLSLDL (112 aa)).

Belongs to the methyltransferase superfamily. RlmKL family.

It localises to the cytoplasm. The enzyme catalyses guanosine(2445) in 23S rRNA + S-adenosyl-L-methionine = N(2)-methylguanosine(2445) in 23S rRNA + S-adenosyl-L-homocysteine + H(+). It carries out the reaction guanosine(2069) in 23S rRNA + S-adenosyl-L-methionine = N(2)-methylguanosine(2069) in 23S rRNA + S-adenosyl-L-homocysteine + H(+). Its function is as follows. Specifically methylates the guanine in position 2445 (m2G2445) and the guanine in position 2069 (m7G2069) of 23S rRNA. This is Ribosomal RNA large subunit methyltransferase K/L from Ectopseudomonas mendocina (strain ymp) (Pseudomonas mendocina).